A 97-amino-acid polypeptide reads, in one-letter code: Large ribosomal subunit protein bL27 (97 aa).

The propeptide occupies 1–12; that stretch reads MLKMNLANLQLF. The disordered stretch occupies residues 14 to 38; it reads HKKGGGSTSNGRDSESKRLGAKAAD.

This sequence belongs to the bacterial ribosomal protein bL27 family. The N-terminus is cleaved by ribosomal processing cysteine protease Prp.

The sequence is that of Large ribosomal subunit protein bL27 from Streptococcus mutans serotype c (strain ATCC 700610 / UA159).